The chain runs to 24 residues: Positive regulator of RepFIC repA1 expression (24 aa).

The sequence is that of Positive regulator of RepFIC repA1 expression (repL) from Escherichia coli.